The sequence spans 277 residues: Ribosomal RNA small subunit methyltransferase A (277 aa).

Residues N24, L26, G51, E72, D96, and N123 each coordinate S-adenosyl-L-methionine.

This sequence belongs to the class I-like SAM-binding methyltransferase superfamily. rRNA adenine N(6)-methyltransferase family. RsmA subfamily.

It localises to the cytoplasm. It carries out the reaction adenosine(1518)/adenosine(1519) in 16S rRNA + 4 S-adenosyl-L-methionine = N(6)-dimethyladenosine(1518)/N(6)-dimethyladenosine(1519) in 16S rRNA + 4 S-adenosyl-L-homocysteine + 4 H(+). In terms of biological role, specifically dimethylates two adjacent adenosines (A1518 and A1519) in the loop of a conserved hairpin near the 3'-end of 16S rRNA in the 30S particle. May play a critical role in biogenesis of 30S subunits. The polypeptide is Ribosomal RNA small subunit methyltransferase A (Ureaplasma parvum serovar 3 (strain ATCC 27815 / 27 / NCTC 11736)).